A 312-amino-acid polypeptide reads, in one-letter code: Malate dehydrogenase (312 aa).

Residues 12-17 and aspartate 36 contribute to the NAD(+) site; that span reads GAGFTG. 2 residues coordinate substrate: arginine 87 and arginine 93. NAD(+) is bound by residues asparagine 100 and 123 to 125; that span reads LTN. Residue asparagine 125 coordinates substrate. Serine 149 carries the phosphoserine modification. Residue arginine 156 participates in substrate binding. Catalysis depends on histidine 180, which acts as the Proton acceptor.

The protein belongs to the LDH/MDH superfamily. MDH type 3 family.

The enzyme catalyses (S)-malate + NAD(+) = oxaloacetate + NADH + H(+). Its function is as follows. Catalyzes the reversible oxidation of malate to oxaloacetate. This is Malate dehydrogenase from Bacillus anthracis (strain A0248).